We begin with the raw amino-acid sequence, 460 residues long: 3-isopropylmalate dehydratase large subunit (460 aa).

Positions 338, 398, and 401 each coordinate [4Fe-4S] cluster.

This sequence belongs to the aconitase/IPM isomerase family. LeuC type 1 subfamily. As to quaternary structure, heterodimer of LeuC and LeuD. It depends on [4Fe-4S] cluster as a cofactor.

The enzyme catalyses (2R,3S)-3-isopropylmalate = (2S)-2-isopropylmalate. It participates in amino-acid biosynthesis; L-leucine biosynthesis; L-leucine from 3-methyl-2-oxobutanoate: step 2/4. Its function is as follows. Catalyzes the isomerization between 2-isopropylmalate and 3-isopropylmalate, via the formation of 2-isopropylmaleate. This is 3-isopropylmalate dehydratase large subunit from Streptococcus thermophilus (strain ATCC BAA-491 / LMD-9).